Consider the following 379-residue polypeptide: MFKPIRTTHPAIKIINSTLIDLPAPNNISIWWNYGSLLGLCLVIQVLTGLFLSMHYVPNIEMAFSSVALISRDVNYGWLLRSIHANGASMFFLFIYLHAGRGLYYGSYNLSETWNIGVILFLLTMATAFMGYVLPWGQMSFWGATVITNLFSAIPYIGKTLVEWIWGGFAVDNATLNRFFAFHFILPFAIMGATILHIMFLHESGSNNPIGLNADSDRIPFHPYYSIKDTLGYTLAISALSLMVLFEPNLFTDPENFLMANPLVTPIHIKPEWYFLWMYAILRSIPNKLGGVMALFAAIVILFIPPLTSVMNKRSLSFYPLNKTMFWGLVASWAILTWIGGRPVEDPFIIIGQVFTSLYFIYFISSPTISKLWDDSIII.

The next 4 helical transmembrane spans lie at 34–54 (YGSL…FLSM), 78–99 (WLLR…YLHA), 114–134 (WNIG…GYVL), and 179–199 (FFAF…LHIM). Residues His-84 and His-98 each contribute to the heme b site. His-183 and His-197 together coordinate heme b. Residue His-202 participates in a ubiquinone binding. The next 4 membrane-spanning stretches (helical) occupy residues 227-247 (IKDT…VLFE), 289-309 (LGGV…PLTS), 321-341 (LNKT…WIGG), and 349-369 (IIIG…SPTI).

The protein belongs to the cytochrome b family. In terms of assembly, the main subunits of complex b-c1 are: cytochrome b, cytochrome c1 and the Rieske protein. The cofactor is heme b.

The protein localises to the mitochondrion inner membrane. Its function is as follows. Component of the ubiquinol-cytochrome c reductase complex (complex III or cytochrome b-c1 complex) that is part of the mitochondrial respiratory chain. The b-c1 complex mediates electron transfer from ubiquinol to cytochrome c. Contributes to the generation of a proton gradient across the mitochondrial membrane that is then used for ATP synthesis. This chain is Cytochrome b (MT-CYB), found in Lumbricus terrestris (Common earthworm).